Here is a 290-residue protein sequence, read N- to C-terminus: ATP synthase gamma chain (290 aa).

The protein belongs to the ATPase gamma chain family. F-type ATPases have 2 components, CF(1) - the catalytic core - and CF(0) - the membrane proton channel. CF(1) has five subunits: alpha(3), beta(3), gamma(1), delta(1), epsilon(1). CF(0) has three main subunits: a, b and c.

The protein resides in the cell membrane. In terms of biological role, produces ATP from ADP in the presence of a proton gradient across the membrane. The gamma chain is believed to be important in regulating ATPase activity and the flow of protons through the CF(0) complex. The protein is ATP synthase gamma chain of Chloroflexus aurantiacus (strain ATCC 29366 / DSM 635 / J-10-fl).